Here is a 1005-residue protein sequence, read N- to C-terminus: Mitogen-activated protein kinase kinase kinase 10 (1005 aa).

The SH3 domain maps to 32 to 96; the sequence is VSNPLWMAVF…PSNYVVSDDK (65 aa). In terms of domain architecture, Protein kinase spans 118–380; sequence LNLDEIIGVG…SCILEQLTTI (263 aa). Residues 124–132 and K145 each bind ATP; that span reads IGVGGFGKV. The active-site Proton acceptor is D242. Leucine-zipper regions lie at residues 404 to 425 and 439 to 460; these read IQQMFDELRTKEKELRSREEEL and LKRREQELAEREIDIVERELNI. Disordered regions lie at residues 551–611, 647–676, 712–736, and 758–940; these read SVLK…KHTP, QSDHRSHPEDTAHAGAPSSDSPKRGSQSRR, FQWAGRGPRRRASSPSRSMSYGEDS, and RSLI…AEGA. Composition is skewed to basic and acidic residues over residues 576–588 and 648–658; these read QKERVGGEERLKT and SDHRSHPEDTA. Composition is skewed to basic and acidic residues over residues 761 to 786 and 799 to 809; these read IRSDSDDIGLDHDNVSSGRGVKEDRG and YKVESFKRDPK. The span at 810 to 826 shows a compositional bias: polar residues; sequence QSLTPTHVTVGRNNTTE. Over residues 862-879 the composition is skewed to pro residues; that stretch reads EPSPFPRLPDPHFVFPPP. Positions 915–940 are enriched in low complexity; it reads SLSQTHSSSPSSGGGDACSSGSAEGA.

Belongs to the protein kinase superfamily. STE Ser/Thr protein kinase family. MAP kinase kinase kinase subfamily. In terms of assembly, homodimer. Binds to the GTPase rac1 but not cdc42 or rhoA. Interacts (via kinase domain) with pak1 (via kinase domain). Interacts with the ubiquitin-conjugating enzyme ube2d4. It depends on Mg(2+) as a cofactor. In terms of processing, autophosphorylation on serine and threonine residues within the activation loop plays a role in enzyme activation. Post-translationally, mono- and poly-ubiquitinated. As to expression, in adults, strongly expressed in the brain and spleen with lower levels in pancreas, heart, muscle and kidney (at protein level). In the developing embryo, expressed at stage 22 in the cement gland. Weakly expressed in the pronephros from stage 24 or 25, with expression increasing in strength by stage 30 and continuing at least until stage 37. Expression in the developing pronephros correlates with epithelialization of the proximal pronephric tubules.

It carries out the reaction L-seryl-[protein] + ATP = O-phospho-L-seryl-[protein] + ADP + H(+). The enzyme catalyses L-threonyl-[protein] + ATP = O-phospho-L-threonyl-[protein] + ADP + H(+). With respect to regulation, homodimerization via the leucine zipper domains is required for autophosphorylation and subsequent activation. Its function is as follows. Activates the JUN N-terminal pathway. Essential for pronephros and cement gland development. This is Mitogen-activated protein kinase kinase kinase 10 (map3k10) from Xenopus laevis (African clawed frog).